A 199-amino-acid polypeptide reads, in one-letter code: MEWKYVIPGIPDNFFERDEEIPMTKEEIRALALSKLRIRKGDMILDIGCGTGSVTVEASLLVGSTGKVYGVDKEEKAINLTRRNAEKFGVLNNIVLIKGEAPEILFTINEKFDRIFIGGGSEKIKEIISASWEIIKKGGRVVIDAILLETVNNAISAMENIGFMNLEITEVIIAKGMKTKVGTAMMTRNPIFIISGEKQ.

Residues threonine 24, 48–52, aspartate 72, and alanine 101 contribute to the S-adenosyl-L-methionine site; that span reads GCGTG.

It belongs to the methyltransferase superfamily. Archaeal-type CbiT family.

It carries out the reaction Co-precorrin-6B + S-adenosyl-L-methionine = Co-precorrin-7 + S-adenosyl-L-homocysteine + CO2. Its pathway is cofactor biosynthesis; adenosylcobalamin biosynthesis; cob(II)yrinate a,c-diamide from sirohydrochlorin (anaerobic route): step 8/10. Its function is as follows. Catalyzes the methylation of C-15 in cobalt-precorrin-6B followed by the decarboxylation of C-12 to form cobalt-precorrin-7. The polypeptide is Probable cobalt-precorrin-6B C(15)-methyltransferase (decarboxylating) (Saccharolobus islandicus (strain L.S.2.15 / Lassen #1) (Sulfolobus islandicus)).